The sequence spans 91 residues: Large ribosomal subunit protein bL27 (91 aa).

A disordered region spans residues Met-1 to Leu-21.

It belongs to the bacterial ribosomal protein bL27 family.

The sequence is that of Large ribosomal subunit protein bL27 from Azoarcus sp. (strain BH72).